The following is a 674-amino-acid chain: Methionine--tRNA ligase (674 aa).

The 'HIGH' region motif lies at 11–21; that stretch reads PYANGDLHLGH. Zn(2+) is bound by residues Cys-142, Cys-145, Cys-155, and Cys-158. A 'KMSKS' region motif is present at residues 330-334; that stretch reads KMSKS. Lys-333 provides a ligand contact to ATP. Residues 574-674 enclose the tRNA-binding domain; the sequence is DFMKVDLRIA…EGAQPGMRVK (101 aa).

Belongs to the class-I aminoacyl-tRNA synthetase family. MetG type 1 subfamily. Homodimer. Zn(2+) is required as a cofactor.

Its subcellular location is the cytoplasm. The enzyme catalyses tRNA(Met) + L-methionine + ATP = L-methionyl-tRNA(Met) + AMP + diphosphate. Its function is as follows. Is required not only for elongation of protein synthesis but also for the initiation of all mRNA translation through initiator tRNA(fMet) aminoacylation. The polypeptide is Methionine--tRNA ligase (Francisella tularensis subsp. tularensis (strain FSC 198)).